A 311-amino-acid chain; its full sequence is Ciliary microtubule inner protein 2B (311 aa).

2 disordered regions span residues 64-93 and 150-183; these read PFPP…LGDP and QEGR…APFM.

It belongs to the CIMIP2 family. As to expression, expressed in airway epithelial cells.

It localises to the cytoplasm. Its subcellular location is the cytoskeleton. It is found in the cilium axoneme. Its function is as follows. Microtubule inner protein (MIP) part of the dynein-decorated doublet microtubules (DMTs) in cilia axoneme, which is required for motile cilia beating. This is Ciliary microtubule inner protein 2B (cimip2b) from Xenopus laevis (African clawed frog).